Here is a 517-residue protein sequence, read N- to C-terminus: Crotonobetaine/carnitine--CoA ligase (517 aa).

This sequence belongs to the ATP-dependent AMP-binding enzyme family.

The catalysed reaction is 4-(trimethylamino)butanoate + ATP + CoA = 4-(trimethylamino)butanoyl-CoA + AMP + diphosphate. It catalyses the reaction crotonobetaine + ATP + CoA = crotonobetainyl-CoA + AMP + diphosphate. The enzyme catalyses (R)-carnitine + ATP + CoA = (R)-carnitinyl-CoA + AMP + diphosphate. It participates in amine and polyamine metabolism; carnitine metabolism. In terms of biological role, catalyzes the transfer of CoA to carnitine, generating the initial carnitinyl-CoA needed for the CaiB reaction cycle. Also has activity toward crotonobetaine and gamma-butyrobetaine. The sequence is that of Crotonobetaine/carnitine--CoA ligase from Salmonella paratyphi C (strain RKS4594).